The primary structure comprises 310 residues: tRNA-cytidine(32) 2-sulfurtransferase (310 aa).

The short motif at 45–50 (SGGKDS) is the PP-loop motif element. [4Fe-4S] cluster contacts are provided by C120, C123, and C211.

Belongs to the TtcA family. In terms of assembly, homodimer. It depends on Mg(2+) as a cofactor. Requires [4Fe-4S] cluster as cofactor.

Its subcellular location is the cytoplasm. It carries out the reaction cytidine(32) in tRNA + S-sulfanyl-L-cysteinyl-[cysteine desulfurase] + AH2 + ATP = 2-thiocytidine(32) in tRNA + L-cysteinyl-[cysteine desulfurase] + A + AMP + diphosphate + H(+). The protein operates within tRNA modification. Catalyzes the ATP-dependent 2-thiolation of cytidine in position 32 of tRNA, to form 2-thiocytidine (s(2)C32). The sulfur atoms are provided by the cysteine/cysteine desulfurase (IscS) system. This is tRNA-cytidine(32) 2-sulfurtransferase from Shewanella putrefaciens (strain CN-32 / ATCC BAA-453).